Consider the following 251-residue polypeptide: uncharacterized protein (251 aa).

A divalent metal cation-binding residues include H5, H7, E101, H132, H163, and D209.

It belongs to the metallo-dependent hydrolases superfamily. TatD-type hydrolase family. The cofactor is a divalent metal cation.

This is an uncharacterized protein from Methanocaldococcus jannaschii (strain ATCC 43067 / DSM 2661 / JAL-1 / JCM 10045 / NBRC 100440) (Methanococcus jannaschii).